The following is a 721-amino-acid chain: Polyribonucleotide nucleotidyltransferase (721 aa).

Residues aspartate 495 and aspartate 501 each coordinate Mg(2+). The KH domain occupies 562-621 (PRLLSFRIDPELIGTVIGPGGRTIKGITERTNTKIDIEDSGIVTIASHDGAAADEAQKII). One can recognise an S1 motif domain in the interval 631–699 (GEVFSGSITR…NRGRINLTLR (69 aa)). The tract at residues 698-721 (LRGVPQSGDGAGEEPQPTPVAPLS) is disordered.

Belongs to the polyribonucleotide nucleotidyltransferase family. Mg(2+) is required as a cofactor.

It is found in the cytoplasm. It carries out the reaction RNA(n+1) + phosphate = RNA(n) + a ribonucleoside 5'-diphosphate. Functionally, involved in mRNA degradation. Catalyzes the phosphorolysis of single-stranded polyribonucleotides processively in the 3'- to 5'-direction. This is Polyribonucleotide nucleotidyltransferase from Parasynechococcus marenigrum (strain WH8102).